Reading from the N-terminus, the 208-residue chain is FMN-dependent NADH:quinone oxidoreductase (208 aa).

99 to 102 contributes to the FMN binding site; the sequence is MWNF.

The protein belongs to the azoreductase type 1 family. In terms of assembly, homodimer. FMN is required as a cofactor.

It carries out the reaction 2 a quinone + NADH + H(+) = 2 a 1,4-benzosemiquinone + NAD(+). The enzyme catalyses N,N-dimethyl-1,4-phenylenediamine + anthranilate + 2 NAD(+) = 2-(4-dimethylaminophenyl)diazenylbenzoate + 2 NADH + 2 H(+). Functionally, quinone reductase that provides resistance to thiol-specific stress caused by electrophilic quinones. Also exhibits azoreductase activity. Catalyzes the reductive cleavage of the azo bond in aromatic azo compounds to the corresponding amines. This chain is FMN-dependent NADH:quinone oxidoreductase, found in Brevibacillus brevis (strain 47 / JCM 6285 / NBRC 100599).